The primary structure comprises 903 residues: DNA mismatch repair protein MutS (903 aa).

Residue G655–S662 coordinates ATP.

The protein belongs to the DNA mismatch repair MutS family.

Functionally, this protein is involved in the repair of mismatches in DNA. It is possible that it carries out the mismatch recognition step. This protein has a weak ATPase activity. This chain is DNA mismatch repair protein MutS, found in Caulobacter vibrioides (strain ATCC 19089 / CIP 103742 / CB 15) (Caulobacter crescentus).